A 1149-amino-acid polypeptide reads, in one-letter code: cGMP-specific 3',5'-cyclic phosphodiesterase (1149 aa).

Low complexity-rich tracts occupy residues 1 to 19 (MHGT…DVSS) and 31 to 47 (ATSS…ASSS). The tract at residues 1–175 (MHGTVSRSSS…STTASQQDVD (175 aa)) is disordered. The segment covering 48–59 (KPLTNGANKTAI) has biased composition (polar residues). Positions 60–85 (STAAGVTPGAAPGPGCAAIPASGSSG) are enriched in low complexity. Positions 96–108 (QSNNNRPAGSNRS) are enriched in polar residues. The span at 132 to 158 (SSSSPSQSPSQSQSQSQASIQTQTSQQ) shows a compositional bias: low complexity. GAF domains lie at 278 to 430 (DIDV…GIGI) and 462 to 643 (NLEC…GLGI). The PDEase domain maps to 673 to 996 (SQDQTEKLTQ…RNWQDLAEKV (324 aa)). The active-site Proton donor is His749. His753, His789, Asp790, and Asp900 together coordinate a divalent metal cation. 2 disordered regions span residues 1037-1066 (QQSQ…TGAL) and 1096-1149 (SHVS…CALL). Basic and acidic residues-rich tracts occupy residues 1042-1053 (GSEDSHTPEHQR) and 1096-1106 (SHVSEDMDDKS). Residues 1115 to 1135 (ASGSMGRMSASSSTSSAGGQM) are compositionally biased toward low complexity. Over residues 1139–1149 (SKKRSKLCALL) the composition is skewed to basic residues. Residue Cys1146 is modified to Cysteine methyl ester. The S-farnesyl cysteine moiety is linked to residue Cys1146. The propeptide at 1147–1149 (ALL) is removed in mature form.

Belongs to the cyclic nucleotide phosphodiesterase family. Interacts with PrBP. Requires a divalent metal cation as cofactor.

It localises to the cell membrane. It catalyses the reaction 3',5'-cyclic GMP + H2O = GMP + H(+). Functionally, has a role regulating cGMP transport in Malpighian tubule principal cells. In Drosophila yakuba (Fruit fly), this protein is cGMP-specific 3',5'-cyclic phosphodiesterase.